Here is a 103-residue protein sequence, read N- to C-terminus: Large ribosomal subunit protein uL24 (103 aa).

Belongs to the universal ribosomal protein uL24 family. In terms of assembly, part of the 50S ribosomal subunit.

One of two assembly initiator proteins, it binds directly to the 5'-end of the 23S rRNA, where it nucleates assembly of the 50S subunit. In terms of biological role, one of the proteins that surrounds the polypeptide exit tunnel on the outside of the subunit. This chain is Large ribosomal subunit protein uL24 (rplX), found in Bacillus spizizenii (strain ATCC 23059 / NRRL B-14472 / W23) (Bacillus subtilis subsp. spizizenii).